A 254-amino-acid chain; its full sequence is MYSSYSLSKRLVSIPILAIQLLLIRSVSSLNLTNDYLNHKCLVSQGKYRPGDKYEDNLNFLTREVLSYNFPTGFIHISYGEAPSFVAIILQCRGDSYDSKCLSCYATALSGLRRRCQRNKGRVIWYDQCFLFINSIRSSPRKNDYRNVFSMHNPNNMIEDTELFNKKTRDFLYELMLEATTPNRTMMLYAAGEKKLGTKKLYAMVQCAQDILRCKGCLEWSINELSKCCHGKQGARVLGTECTLRYELYPFLRS.

The signal sequence occupies residues 1–29; that stretch reads MYSSYSLSKRLVSIPILAIQLLLIRSVSS. Gnk2-homologous domains are found at residues 36–138 and 145–251; these read YLNH…SIRS and YRNV…LYPF.

It belongs to the cysteine-rich repeat secretory protein family.

The protein localises to the secreted. The chain is Putative cysteine-rich repeat secretory protein 37 (CRRSP37) from Arabidopsis thaliana (Mouse-ear cress).